A 188-amino-acid polypeptide reads, in one-letter code: Elongation factor P (188 aa).

Belongs to the elongation factor P family.

Its subcellular location is the cytoplasm. The protein operates within protein biosynthesis; polypeptide chain elongation. Involved in peptide bond synthesis. Stimulates efficient translation and peptide-bond synthesis on native or reconstituted 70S ribosomes in vitro. Probably functions indirectly by altering the affinity of the ribosome for aminoacyl-tRNA, thus increasing their reactivity as acceptors for peptidyl transferase. This Christiangramia forsetii (strain DSM 17595 / CGMCC 1.15422 / KT0803) (Gramella forsetii) protein is Elongation factor P.